Consider the following 352-residue polypeptide: DNA polymerase IV (352 aa).

One can recognise a UmuC domain in the interval 6 to 186 (IIHIDMDAFY…LPLGKIPGVG (181 aa)). Mg(2+) is bound by residues Asp-10 and Asp-104. The active site involves Glu-105.

It belongs to the DNA polymerase type-Y family. As to quaternary structure, monomer. Mg(2+) serves as cofactor.

It localises to the cytoplasm. It catalyses the reaction DNA(n) + a 2'-deoxyribonucleoside 5'-triphosphate = DNA(n+1) + diphosphate. Its function is as follows. Poorly processive, error-prone DNA polymerase involved in untargeted mutagenesis. Copies undamaged DNA at stalled replication forks, which arise in vivo from mismatched or misaligned primer ends. These misaligned primers can be extended by PolIV. Exhibits no 3'-5' exonuclease (proofreading) activity. May be involved in translesional synthesis, in conjunction with the beta clamp from PolIII. The sequence is that of DNA polymerase IV from Neisseria meningitidis serogroup C / serotype 2a (strain ATCC 700532 / DSM 15464 / FAM18).